The chain runs to 137 residues: Universal stress protein HP_0031 (137 aa).

Belongs to the universal stress protein A family.

The chain is Universal stress protein HP_0031 from Helicobacter pylori (strain ATCC 700392 / 26695) (Campylobacter pylori).